Here is a 762-residue protein sequence, read N- to C-terminus: MKNLKKLIAVVSTFALVFSAMAVGFAATTPFTDVKDDAPYASAVARLYALNITNGVGDPKFGVDQPVTRAQMITFVNRMLGYEDLAEMAKSEKSAFKDVPQNHWAVGQINLAYKLGLAQGVGNGKFDPNSELRYAQALAFVLRALGFKDLDWPYGYLAKAQDLGLVHGLNLAYNGVIKRGDLALILDRALEVPMVKYVDGKEVLGEPLISKVATKAEYTVIATNAQDRSVEEGKVAVLDKDGKLTTINAGLVDFSEYLGKKVIVYSERFGDPVYVAEGDNDVVSFTEGQDSVGTTVYKNDDNKTAIKVDDNAYVLYNGYLTKVSKVTVKEGAEVTIINNNYLIVNGSYDNSTIVYNDVQSGDKYLNRDSNYELKGTVTVTGAVSKVTDIKANDYIYYGKQYDVNGNVVGTVIYVVRNQVTGTVTEKSVSGSTYKASIDNVSYTVADNNVWNQLEPGKKVTVILNKDNVIVGISSTTTTTAVNYAIFKEKSDPFTAWFAKVKLILPDAAEKVFDAVYSDVYDKVNLAEGTIVTYTVDANGKLNDIQRANDQPFSSASYKADAKVLTEGSTTYYITDNTVLLNNTSDGYKALKLTDLKDATNLNVKIVADNYNVAKVVVFNNASFVSTTTSTVYAYVTGTADVYVNGSTFTRLTVLENGQTKTYDANAQLATNYTHKAVVLTLTNAKIANIALPTVASGVKLTNIDQANLRITDTTNKGYLLDPNFIVVDTNGNLKGLSDITKDTGVNLYTNDVGKVFVIEIVQ.

The N-terminal stretch at 1-26 (MKNLKKLIAVVSTFALVFSAMAVGFA) is a signal peptide. SLH domains follow at residues 27–90 (ATTP…EMAK), 92–155 (EKSA…WPYG), and 156–204 (YLAK…KEVL). 4 O-linked (Glc...) tyrosine glycosylation sites follow: Tyr-297, Tyr-516, Tyr-520, and Tyr-632.

In terms of processing, glycosylated; contains 8% carbohydrates, which correspond to about 40 to 50 sugar molecules per monomer. O-linked glycans consist of Glc, GalNAc and GlcNAc.

It localises to the secreted. The protein localises to the cell wall. It is found in the S-layer. The S-layer is a paracrystalline mono-layered assembly of proteins which coat the surface of bacteria. The chain is Cell surface protein from Thermoanaerobacter kivui (Acetogenium kivui).